The primary structure comprises 510 residues: Histidine ammonia-lyase (510 aa).

The 5-imidazolinone (Ala-Gly) cross-link spans 143 to 145 (ASG). Residue S144 is modified to 2,3-didehydroalanine (Ser).

The protein belongs to the PAL/histidase family. In terms of processing, contains an active site 4-methylidene-imidazol-5-one (MIO), which is formed autocatalytically by cyclization and dehydration of residues Ala-Ser-Gly.

The protein resides in the cytoplasm. It catalyses the reaction L-histidine = trans-urocanate + NH4(+). Its pathway is amino-acid degradation; L-histidine degradation into L-glutamate; N-formimidoyl-L-glutamate from L-histidine: step 1/3. The protein is Histidine ammonia-lyase of Shewanella woodyi (strain ATCC 51908 / MS32).